A 442-amino-acid polypeptide reads, in one-letter code: Exodeoxyribonuclease 7 large subunit (442 aa).

This sequence belongs to the XseA family. In terms of assembly, heterooligomer composed of large and small subunits.

It is found in the cytoplasm. The catalysed reaction is Exonucleolytic cleavage in either 5'- to 3'- or 3'- to 5'-direction to yield nucleoside 5'-phosphates.. Bidirectionally degrades single-stranded DNA into large acid-insoluble oligonucleotides, which are then degraded further into small acid-soluble oligonucleotides. In Shewanella woodyi (strain ATCC 51908 / MS32), this protein is Exodeoxyribonuclease 7 large subunit.